The chain runs to 139 residues: MAIERTLSILKPDAVKNNITGSINSYIEKSGLKIIAQRKMLLTKKQAELFYEIHKDRPFFGELVEFMTSGSVIVQVLIGENAVSKYRQIMGATDPKQADKGTIRGDFANDISENRVHGSDSLENAHREIAFFFAECELV.

K11, F59, R87, T93, R104, and N114 together coordinate ATP. H117 (pros-phosphohistidine intermediate) is an active-site residue.

This sequence belongs to the NDK family. Homotetramer. The cofactor is Mg(2+).

Its subcellular location is the cytoplasm. The catalysed reaction is a 2'-deoxyribonucleoside 5'-diphosphate + ATP = a 2'-deoxyribonucleoside 5'-triphosphate + ADP. It catalyses the reaction a ribonucleoside 5'-diphosphate + ATP = a ribonucleoside 5'-triphosphate + ADP. Major role in the synthesis of nucleoside triphosphates other than ATP. The ATP gamma phosphate is transferred to the NDP beta phosphate via a ping-pong mechanism, using a phosphorylated active-site intermediate. The chain is Nucleoside diphosphate kinase from Wolbachia pipientis subsp. Culex pipiens (strain wPip).